The following is a 538-amino-acid chain: Probable bifunctional riboflavin biosynthesis protein RIBA 1, chloroplastic (538 aa).

The span at 1–16 shows a compositional bias: polar residues; it reads MSRLSSIYSQHRTSGL. Residues 1–29 are disordered; that stretch reads MSRLSSIYSQHRTSGLRSDRSIMPNSTSN. A chloroplast-targeting transit peptide spans 1–73; sequence MSRLSSIYSQ…NGQASPSKVV (73 aa). Residues 46-311 are DHBP synthase; the sequence is RNFHISHAVG…IADLIRYRRK (266 aa). D-ribulose 5-phosphate-binding positions include 134 to 135, Asp139, 249 to 253, and Glu273; these read RE and RAGHT. Glu135 is a binding site for Mg(2+). His252 is a binding site for Mg(2+). The tract at residues 312–530 is GTP cyclohydrolase II; that stretch reads RDRLVERVCV…DGGIKKEQDQ (219 aa). 362–366 provides a ligand contact to GTP; that stretch reads RVHSE. Positions 367, 378, and 380 each coordinate Zn(2+). GTP-binding positions include Gln383, 406–408, and Thr428; that span reads EGR. The active-site Proton acceptor; for GTP cyclohydrolase activity is the Asp440. Residue Arg442 is the Nucleophile; for GTP cyclohydrolase activity of the active site. Thr463 and Lys468 together coordinate GTP. Residues 506-538 form a disordered region; the sequence is HVYGTRPSGNTSTLADGGIKKEQDQIDSASEQE.

This sequence in the N-terminal section; belongs to the DHBP synthase family. In the C-terminal section; belongs to the GTP cyclohydrolase II family. Mg(2+) is required as a cofactor. Requires Mn(2+) as cofactor. Zn(2+) serves as cofactor.

It is found in the plastid. The protein resides in the chloroplast. The catalysed reaction is D-ribulose 5-phosphate = (2S)-2-hydroxy-3-oxobutyl phosphate + formate + H(+). It catalyses the reaction GTP + 4 H2O = 2,5-diamino-6-hydroxy-4-(5-phosphoribosylamino)-pyrimidine + formate + 2 phosphate + 3 H(+). It participates in cofactor biosynthesis; riboflavin biosynthesis; 2-hydroxy-3-oxobutyl phosphate from D-ribulose 5-phosphate: step 1/1. The protein operates within cofactor biosynthesis; riboflavin biosynthesis; 5-amino-6-(D-ribitylamino)uracil from GTP: step 1/4. In terms of biological role, involved in riboflavin biosynthesis. Catalyzes both the conversion of D-ribulose 5-phosphate to formate and 3,4-dihydroxy-2-butanone 4-phosphate and the conversion of GTP to 2,5-diamino-6-ribosylamino-4(3H)-pyrimidinone 5'-phosphate (DARP), formate and pyrophosphate. This Oryza sativa subsp. japonica (Rice) protein is Probable bifunctional riboflavin biosynthesis protein RIBA 1, chloroplastic (RIBA1).